A 684-amino-acid polypeptide reads, in one-letter code: Multisite-specific tRNA:(cytosine-C(5))-methyltransferase (684 aa).

Positions 1–12 are enriched in basic residues; sequence MARRKNFKKGNK. A disordered region spans residues 1–24; the sequence is MARRKNFKKGNKKTFGARDDSRAQ. Residues 173 to 179, D202, D229, and D257 each bind S-adenosyl-L-methionine; that span reads CAAPGSK. C310 serves as the catalytic Nucleophile. Residue T426 is modified to Phosphothreonine. The residue at position 431 (S431) is a Phosphoserine. Residues 650–684 form a disordered region; the sequence is KATPSAEEKEKEKETTESPAETTTGTSTEAPSAAN. Basic and acidic residues predominate over residues 655–665; that stretch reads AEEKEKEKETT. A compositionally biased stretch (low complexity) spans 666-684; the sequence is ESPAETTTGTSTEAPSAAN. The residue at position 667 (S667) is a Phosphoserine.

This sequence belongs to the class I-like SAM-binding methyltransferase superfamily. RsmB/NOP family. TRM4 subfamily.

The protein localises to the nucleus. Its subcellular location is the nucleolus. The enzyme catalyses cytidine(34) in tRNA precursor + S-adenosyl-L-methionine = 5-methylcytidine(34) in tRNA precursor + S-adenosyl-L-homocysteine + H(+). It catalyses the reaction cytidine(40) in tRNA precursor + S-adenosyl-L-methionine = 5-methylcytidine(40) in tRNA precursor + S-adenosyl-L-homocysteine + H(+). It carries out the reaction cytidine(48) in tRNA + S-adenosyl-L-methionine = 5-methylcytidine(48) in tRNA + S-adenosyl-L-homocysteine + H(+). The catalysed reaction is cytidine(49) in tRNA + S-adenosyl-L-methionine = 5-methylcytidine(49) in tRNA + S-adenosyl-L-homocysteine + H(+). Its function is as follows. Methylates cytosine to m5C at several positions in different tRNAs and pre-tRNAs containing intron. Able to modify tRNAs at all four positions (34, 40, 48 and 49) at which m5C has been found in tRNAs. May be involved in ribosome biogenesis as its disruption leads to increased sensitivity to the antibiotic paromomycin. The chain is Multisite-specific tRNA:(cytosine-C(5))-methyltransferase (NCL1) from Saccharomyces cerevisiae (strain ATCC 204508 / S288c) (Baker's yeast).